The primary structure comprises 629 residues: Pumilio homolog 3 (629 aa).

Basic residues-rich tracts occupy residues 1–10 (MEGKPRKKSF) and 18–37 (PSFKSKGKPGGKPQGKRPFK). The tract at residues 1 to 92 (MEGKPRKKSF…EGDERKKPKW (92 aa)) is disordered. Residues 62–92 (KPTDGKFAKKRKFPGDRIKQEEGDERKKPKW) are compositionally biased toward basic and acidic residues. The short motif at 88–100 (KKPKWDEFKQKKK) is the Nuclear localization signal element. The PUM-HD domain occupies 120–473 (RAKQVWEMVR…ELLEAASPSL (354 aa)). 11 Pumilio repeats span residues 160 to 195 (HDSTRVLQCFIQFGSDKQRKEVFDELKEHIVELSKS), 196 to 231 (KYARNIVKKFLMYGSKEQVGEVMLAFKGKVRQMLRH), 232 to 260 (SEASSVVEYAYNDKAILSQRLMLTEELYG), 272 to 308 (PTLEKVLEANPGKLESILDEMKQILTPMAQKEAVIKH), 309 to 344 (SLVHKVFLDFFEHAPDKQRTEMIESIREAVVYMAHT), 345 to 380 (HDGARVTMHCLWHGTTKDRKVIVKTMKSYIAKFAMG), 381 to 418 (EYAHLVLLAAFDCIDDTKLVKQIIISEMVSSLSEIISN), 419 to 487 (KHGK…MVMD), 488 to 534 (KSCC…MAEH), 535 to 579 (PAGH…WASV), and 580 to 618 (NRGAIILCCLLQSADESVAEEVKAMLKSSIPELQRLQNS).

As to expression, in adult, expressed at high levels in eye and ovary and at lower levels in brain, testis and head kidney. In the adult ovary, prominently expressed in early immature follicles.

The protein resides in the nucleus. It localises to the nucleolus. It is found in the nucleoplasm. The protein localises to the chromosome. Its function is as follows. Inhibits the poly(ADP-ribosyl)ation activity of PARP1 and the degradation of PARP1 by CASP3 following genotoxic stress. Binds to double-stranded RNA or DNA without sequence specificity. Involved in development of the eye and of primordial germ cells. In Danio rerio (Zebrafish), this protein is Pumilio homolog 3 (pum3).